Here is a 638-residue protein sequence, read N- to C-terminus: Methyl-accepting chemotaxis protein McpQ (638 aa).

A helical transmembrane segment spans residues 18 to 38 (LGLGFGLVLLLTLAITLTGWH). An HBM domain is found at 45–282 (DRGDKLGNIS…SQTEVRDAAA (238 aa)). A helical transmembrane segment spans residues 287–307 (TLLTVATVLALALGLLAAWAI). The HAMP domain occupies 309-361 (RQIIIPLRQTLRAAERVASGDLTQSLQVQRRDELGQLQASMHRMTQGLRELIG). Positions 366-602 (GVTQIASAAE…EINRSVMNVR (237 aa)) constitute a Methyl-accepting transducer domain.

This sequence belongs to the methyl-accepting chemotaxis (MCP) protein family.

Its subcellular location is the cell membrane. In terms of biological role, chemotactic-signal transducers respond to changes in the concentration of attractants and repellents in the environment, transduce a signal from the outside to the inside of the cell, and facilitate sensory adaptation through the variation of the level of methylation. McpQ recognizes specifically citrate and citrate/metal(2+) complexes. Binds citrate/metal(2+) complexes with higher affinity than free citrate, and mediates preferentially chemotaxis toward citrate/metal(2+) complexes. The polypeptide is Methyl-accepting chemotaxis protein McpQ (Pseudomonas putida (strain ATCC 47054 / DSM 6125 / CFBP 8728 / NCIMB 11950 / KT2440)).